Consider the following 574-residue polypeptide: Putative diflavin flavoprotein A 3 (574 aa).

The interval 43 to 236 (QNGTTYNSFL…PSVKMIATGH (194 aa)) is zinc metallo-hydrolase. Residues His92, Glu94, Asp96, His159, Asp178, and His236 each coordinate Fe cation. A Flavodoxin-like domain is found at 265 to 409 (IGVFYVSEYG…DLGQWVTRDR (145 aa)). Residues 410-574 (SIKAMKSLGA…VHHRKVGNHY (165 aa)) are flavodoxin-reductase-like.

The protein in the N-terminal section; belongs to the zinc metallo-hydrolase group 3 family. It in the C-terminal section; belongs to the flavodoxin reductase family. Fe cation serves as cofactor.

Functionally, mediates electron transfer from NADH to oxygen, reducing it to water. This modular protein has 3 redox cofactors, in other organisms the same activity requires 2 or 3 proteins. The chain is Putative diflavin flavoprotein A 3 (dfa3) from Nostoc sp. (strain PCC 7120 / SAG 25.82 / UTEX 2576).